The sequence spans 485 residues: Glutamyl-tRNA(Gln) amidotransferase subunit A (485 aa).

Active-site charge relay system residues include Lys75 and Ser150. The Acyl-ester intermediate role is filled by Ser174.

This sequence belongs to the amidase family. GatA subfamily. As to quaternary structure, heterotrimer of A, B and C subunits.

It catalyses the reaction L-glutamyl-tRNA(Gln) + L-glutamine + ATP + H2O = L-glutaminyl-tRNA(Gln) + L-glutamate + ADP + phosphate + H(+). Its function is as follows. Allows the formation of correctly charged Gln-tRNA(Gln) through the transamidation of misacylated Glu-tRNA(Gln) in organisms which lack glutaminyl-tRNA synthetase. The reaction takes place in the presence of glutamine and ATP through an activated gamma-phospho-Glu-tRNA(Gln). This Trichodesmium erythraeum (strain IMS101) protein is Glutamyl-tRNA(Gln) amidotransferase subunit A.